Reading from the N-terminus, the 284-residue chain is Hypersensitive-induced response protein 1 (284 aa).

The N-myristoyl glycine moiety is linked to residue glycine 2.

In terms of assembly, interacts with LRR1.

The protein localises to the cell membrane. Positive regulator of hypersensitive response (HR)-like cell death. May be involved in potassium ion channel regulation. The chain is Hypersensitive-induced response protein 1 from Oryza sativa subsp. japonica (Rice).